The sequence spans 203 residues: Holliday junction branch migration complex subunit RuvA (203 aa).

The tract at residues 1-61 is domain I; the sequence is MIIYKYGKIM…EYTKVTYGFD (61 aa). Residues 62-139 form a domain II region; sequence NFKELVIFED…KFMKKLTSDE (78 aa). Residues 140 to 147 are flexible linker; sequence AAKIKVPA. A domain III region spans residues 147–203; that stretch reads ASSENENKFLDTMKMLGFKQQQIKFALDKIELNDDIETCVENAIKLISQQQHETSRV.

Belongs to the RuvA family. As to quaternary structure, homotetramer. Forms an RuvA(8)-RuvB(12)-Holliday junction (HJ) complex. HJ DNA is sandwiched between 2 RuvA tetramers; dsDNA enters through RuvA and exits via RuvB. An RuvB hexamer assembles on each DNA strand where it exits the tetramer. Each RuvB hexamer is contacted by two RuvA subunits (via domain III) on 2 adjacent RuvB subunits; this complex drives branch migration. In the full resolvosome a probable DNA-RuvA(4)-RuvB(12)-RuvC(2) complex forms which resolves the HJ.

The protein resides in the cytoplasm. The RuvA-RuvB-RuvC complex processes Holliday junction (HJ) DNA during genetic recombination and DNA repair, while the RuvA-RuvB complex plays an important role in the rescue of blocked DNA replication forks via replication fork reversal (RFR). RuvA specifically binds to HJ cruciform DNA, conferring on it an open structure. The RuvB hexamer acts as an ATP-dependent pump, pulling dsDNA into and through the RuvAB complex. HJ branch migration allows RuvC to scan DNA until it finds its consensus sequence, where it cleaves and resolves the cruciform DNA. This is Holliday junction branch migration complex subunit RuvA from Metamycoplasma arthritidis (strain 158L3-1) (Mycoplasma arthritidis).